Consider the following 339-residue polypeptide: Putative NADP-dependent oxidoreductase YfmJ (339 aa).

NADP(+) contacts are provided by residues 156-159, Lys182, Tyr198, Asn222, 244-250, 277-279, and Asn327; these read GAVG, CGAISSY, and FIV.

It belongs to the NADP-dependent oxidoreductase L4BD family.

Putative quinone oxidoreductase that may contribute to the degradation of aromatic compounds. The protein is Putative NADP-dependent oxidoreductase YfmJ (yfmJ) of Bacillus subtilis (strain 168).